Here is a 589-residue protein sequence, read N- to C-terminus: Protein FAM161B (589 aa).

Disordered regions lie at residues 1–166 (MTVG…VCSW), 265–297 (KKEQ…RKIP), and 386–444 (AERR…GLAS). The segment covering 92-106 (PDSDLNDAEDEEDLE) has biased composition (acidic residues). Polar residues predominate over residues 151–166 (TSDSGPPSQHRSVCSW). Residues 265–275 (KKEQQKEDAPQ) are compositionally biased toward basic and acidic residues. Residues 287–297 (SPKKATSRKIP) are compositionally biased toward basic residues. The segment covering 386-396 (AERRETRETTR) has biased composition (basic and acidic residues). Residues 510 to 577 (EEVFKAKLKE…ALKQAGLEEE (68 aa)) are a coiled coil.

It belongs to the FAM161 family. As to quaternary structure, interacts with FAM161A.

The protein is Protein FAM161B (Fam161b) of Mus musculus (Mouse).